We begin with the raw amino-acid sequence, 334 residues long: MESPCRTITLEKNGTSLEPVHYSVQGKEILQIFKENFQKEDPVLFLDGTAGEGGHSFLFLKEFPNSRIILCDRDPIMLSRALTRLSDFSERVVSIQTNFSEINQKLLTSYGIDQTPQGILLDLGISTFHLFHSGRGFSFRESEPLDMRLNPNSGQSAEEILNIYPKDRLMNIFYTYGEERWSKKIAEVIVETRKQNSISTTFELANLVSKIIPRKFWPPGRHPATRIFQALRIEVNQELAHIENGLKLLLDLLRLGGVIQVISFHSLEDRIVKNSFRDYAKQNGFELLTKKPILPSQEEIDENPASRSAKLRILRKTKSVDKKYRNKNFEEEEE.

S-adenosyl-L-methionine is bound by residues 53 to 55 (GGH), Asp-72, Phe-99, Asp-122, and His-129.

This sequence belongs to the methyltransferase superfamily. RsmH family.

The protein resides in the cytoplasm. The catalysed reaction is cytidine(1402) in 16S rRNA + S-adenosyl-L-methionine = N(4)-methylcytidine(1402) in 16S rRNA + S-adenosyl-L-homocysteine + H(+). Specifically methylates the N4 position of cytidine in position 1402 (C1402) of 16S rRNA. This is Ribosomal RNA small subunit methyltransferase H from Leptospira interrogans serogroup Icterohaemorrhagiae serovar copenhageni (strain Fiocruz L1-130).